Here is a 173-residue protein sequence, read N- to C-terminus: MPRSQKNDNFIDKTFTVLADIVLKILPTSKEEKEAFSYYRDGMSAQSEGEYAEALENYYEALKLEEDPYDRSYILYNIGLIYASNGEYIKALEYYHQGLELNFKLPQALNNIAVIYHYQGVQAVEEKNIELSKLMFDKAAQYWQQAIKLAPDNYIEAQNWLKTTGRMKNIQGY.

TPR repeat units lie at residues 35 to 68, 72 to 105, and 120 to 153; these read AFSY…EEDP, SYIL…NFKL, and GVQA…APDN.

It belongs to the Ycf3 family.

It localises to the plastid. It is found in the chloroplast thylakoid membrane. In terms of biological role, essential for the assembly of the photosystem I (PSI) complex. May act as a chaperone-like factor to guide the assembly of the PSI subunits. This Porphyra purpurea (Red seaweed) protein is Photosystem I assembly protein Ycf3.